The following is a 342-amino-acid chain: Nucleoid-associated protein Shewana3_2426 (342 aa).

Belongs to the YejK family.

The protein resides in the cytoplasm. Its subcellular location is the nucleoid. This is Nucleoid-associated protein Shewana3_2426 from Shewanella sp. (strain ANA-3).